The following is a 248-amino-acid chain: MTRLKELPLTALQFYATAPYPCSYLPNKTARSQVATPSHLIHADIYNELLNAGFRRSGLYTYRPYCDECKACVATRILVNQFAPTRSQRRAWKKHAGLVASVLNLGYQEEHYQLYQNYQNQRHAGGDMDSDDQDQYMQFLLQSRVNSRIVEYRDGPQDPHPGRLRMVSMIDLLEQGISSVYTFYDASDTTASFGSYSILWQLEQTKELNLPYLYLGYYIKDSEKMSYKAKYQPMEGLIDDHWQALTGS.

The protein belongs to the R-transferase family. Bpt subfamily.

Its subcellular location is the cytoplasm. It catalyses the reaction N-terminal L-glutamyl-[protein] + L-leucyl-tRNA(Leu) = N-terminal L-leucyl-L-glutamyl-[protein] + tRNA(Leu) + H(+). The enzyme catalyses N-terminal L-aspartyl-[protein] + L-leucyl-tRNA(Leu) = N-terminal L-leucyl-L-aspartyl-[protein] + tRNA(Leu) + H(+). In terms of biological role, functions in the N-end rule pathway of protein degradation where it conjugates Leu from its aminoacyl-tRNA to the N-termini of proteins containing an N-terminal aspartate or glutamate. This chain is Aspartate/glutamate leucyltransferase, found in Polynucleobacter asymbioticus (strain DSM 18221 / CIP 109841 / QLW-P1DMWA-1) (Polynucleobacter necessarius subsp. asymbioticus).